A 423-amino-acid polypeptide reads, in one-letter code: 5-hydroxytryptamine receptor 1A-alpha (423 aa).

Residues 1–47 are Extracellular-facing; the sequence is MDLRATSSNDSNATSGYSDTAAVDWDEGENATGSGSLPDPELSYQII. N-linked (GlcNAc...) asparagine glycosylation is found at Asn-9, Asn-12, and Asn-30. The helical transmembrane segment at 48–68 threads the bilayer; the sequence is TSLFLGALILCSIFGNSCVVA. The Cytoplasmic portion of the chain corresponds to 69-82; sequence AIALERSLQNVANY. A helical membrane pass occupies residues 83-107; it reads LIGSLAVTDLMVSVLVLPMAALYQV. Over 108-116 the chain is Extracellular; that stretch reads LNKWTLGQD. The helical transmembrane segment at 117–141 threads the bilayer; that stretch reads ICDLFIALDVLCCTSSILHLCAIAL. Cys-118 and Cys-196 are disulfide-bonded. Serotonin contacts are provided by Asp-125 and Cys-129. The DRY motif; important for ligand-induced conformation changes signature appears at 142–144; the sequence is DRY. Residues 142 to 161 lie on the Cytoplasmic side of the membrane; sequence DRYWAITDPIDYVNKRTPRR. The chain crosses the membrane as a helical span at residues 162–183; that stretch reads AAVLISVTWLIGFSISIPPMLG. The Extracellular portion of the chain corresponds to 184 to 202; sequence WRSAEDRANPDACIISQDP. A helical transmembrane segment spans residues 203-225; sequence GYTIYSTFGAFYIPLILMLVLYG. Over 226–347 the chain is Cytoplasmic; it reads RIFKAARFRI…LARERKTVKT (122 aa). Residues 311–332 are disordered; it reads LPLPNTPQSSSHENINEKTTGT. A compositionally biased stretch (polar residues) spans 316–329; sequence TPQSSSHENINEKT. Residues Ser-320, Lys-346, Thr-347, and Gly-353 each contribute to the 1D-myo-inositol 4-phosphate site. The helical transmembrane segment at 348–371 threads the bilayer; sequence LGIIMGTFIFCWLPFFIVALVLPF. At 372–379 the chain is on the extracellular side; it reads CAENCYMP. A helical membrane pass occupies residues 380 to 404; that stretch reads EWLGAVINWLGYSNSLLNPIIYAYF. The short motif at 397–401 is the NPxxY motif; important for ligand-induced conformation changes and signaling element; it reads NPIIY. 1D-myo-inositol 4-phosphate is bound by residues Phe-404, Asn-405, and Lys-406. The Cytoplasmic segment spans residues 405–423; sequence NKDFQSAFKKILRCKFHRH.

The protein belongs to the G-protein coupled receptor 1 family. 5-hydroxytryptamine receptor subfamily.

It localises to the cell membrane. Its activity is regulated as follows. G-protein coupled receptor activity is regulated by lipids: phosphatidylinositol 4-phosphate increases HTR1A-mediated activity. In terms of biological role, G-protein coupled receptor for 5-hydroxytryptamine (serotonin). Also functions as a receptor for various drugs and psychoactive substances. Ligand binding causes a conformation change that triggers signaling via guanine nucleotide-binding proteins (G proteins) and modulates the activity of downstream effectors, such as adenylate cyclase. HTR1A is coupled to G(i)/G(o) G alpha proteins and mediates inhibitory neurotransmission: signaling inhibits adenylate cyclase activity and activates a phosphatidylinositol-calcium second messenger system that regulates the release of Ca(2+) ions from intracellular stores. Beta-arrestin family members regulate signaling by mediating both receptor desensitization and resensitization processes. The polypeptide is 5-hydroxytryptamine receptor 1A-alpha (htr1aa) (Takifugu rubripes (Japanese pufferfish)).